The sequence spans 391 residues: Casein kinase II subunit alpha (391 aa).

An interaction with beta subunit region spans residues 36 to 41 (QDDYQL). A Protein kinase domain is found at 39–324 (YQLVRKLGRG…AREAMEHPYF (286 aa)). ATP contacts are provided by residues 45–53 (LGRGKYSEV) and K68. The Proton acceptor role is filled by D156. T344 and T360 each carry phosphothreonine; by CDK1. 2 positions are modified to phosphoserine; by CDK1: S362 and S370.

The protein belongs to the protein kinase superfamily. Ser/Thr protein kinase family. CK2 subfamily. Heterotetramer composed of two catalytic subunits (alpha chain and/or alpha' chain) and two regulatory subunits (beta chains). The tetramer can exist as a combination of 2 alpha/2 beta, 2 alpha'/2 beta or 1 alpha/1 alpha'/2 beta subunits. Also part of a CK2-SPT16-SSRP1 complex composed of SSRP1, SUPT16H, CSNK2A1, CSNK2A2 and CSNK2B, which forms following UV irradiation. Interacts with RNPS1. Interacts with SNAI1. Interacts with PML. Interacts with CCAR2. Interacts with HIRIP3. Phosphorylated at Thr-344, Thr-360, Ser-362 and Ser-370 by CDK1 in prophase and metaphase and dephosphorylated during anaphase. Phosphorylation does not directly affect casein kinase 2 activity, but may contribute to its regulation by forming binding sites for interacting proteins and/or targeting it to different compartments.

It localises to the nucleus. It catalyses the reaction L-seryl-[protein] + ATP = O-phospho-L-seryl-[protein] + ADP + H(+). The catalysed reaction is L-threonyl-[protein] + ATP = O-phospho-L-threonyl-[protein] + ADP + H(+). With respect to regulation, constitutively active protein kinase whose activity is not directly affected by phosphorylation. Seems to be regulated by level of expression and localization. In terms of biological role, catalytic subunit of a constitutively active serine/threonine-protein kinase complex that phosphorylates a large number of substrates containing acidic residues C-terminal to the phosphorylated serine or threonine. Regulates numerous cellular processes, such as cell cycle progression, apoptosis and transcription, as well as viral infection. May act as a regulatory node which integrates and coordinates numerous signals leading to an appropriate cellular response. During mitosis, functions as a component of the p53/TP53-dependent spindle assembly checkpoint (SAC) that maintains cyclin-B-CDK1 activity and G2 arrest in response to spindle damage. Also required for p53/TP53-mediated apoptosis, phosphorylating 'Ser-392' of p53/TP53 following UV irradiation. Phosphorylates a number of DNA repair proteins in response to DNA damage, such as MDC1, MRE11, RAD9A, RAD51 and HTATSF1, promoting their recruitment to DNA damage sites. Can also negatively regulate apoptosis. Phosphorylates the caspases CASP9 and CASP2 and the apoptotic regulator NOL3. Phosphorylation protects CASP9 from cleavage and activation by CASP8, and inhibits the dimerization of CASP2 and activation of CASP8. Phosphorylates YY1, protecting YY1 from cleavage by CASP7 during apoptosis. Regulates transcription by direct phosphorylation of RNA polymerases I, II, III and IV. Also phosphorylates and regulates numerous transcription factors including NF-kappa-B, STAT1, CREB1, IRF1, IRF2, ATF1, ATF4, SRF, MAX, JUN, FOS, MYC and MYB. Phosphorylates Hsp90 and its co-chaperones FKBP4 and CDC37, which is essential for chaperone function. Mediates sequential phosphorylation of FNIP1, promoting its gradual interaction with Hsp90, leading to activate both kinase and non-kinase client proteins of Hsp90. Regulates Wnt signaling by phosphorylating CTNNB1 and the transcription factor LEF1. Acts as an ectokinase that phosphorylates several extracellular proteins. Plays an important role in the circadian clock function by phosphorylating BMAL1 at 'Ser-90' which is pivotal for its interaction with CLOCK and which controls CLOCK nuclear entry. Phosphorylates FMR1, promoting FMR1-dependent formation of a membraneless compartment. May phosphorylate histone H2A on 'Ser-1'. This Bos taurus (Bovine) protein is Casein kinase II subunit alpha (CSNK2A1).